Here is a 1290-residue protein sequence, read N- to C-terminus: 1-phosphatidylinositol 4,5-bisphosphate phosphodiesterase gamma-1 (1290 aa).

Position 2 is an N-acetylalanine (A2). Residues 27 to 142 (RSLEVGTVMT…WIKGLTWLME (116 aa)) enclose the PH 1 domain. The region spanning 152-187 (QIERWLRKQFYSVDRNREDRISAKDLKNMLSQVNYR) is the EF-hand domain. 5 residues coordinate Ca(2+): D165, N167, E169, R171, and D176. Positions 320 to 464 (ETMNNPLSHY…LKRKILIKHK (145 aa)) constitute a PI-PLC X-box domain. Residues H335 and H380 contribute to the active site. The 35-residue stretch at 489 to 523 (SIKNGILYLEDPVNHEWYPHYFVLTSSKIYYSEET) folds into the PH 2; first part domain. Y506 carries the post-translational modification Phosphotyrosine. Residues 522–546 (ETSSDQGNEDEEEPKEASGSTELHS) form a disordered region. SH2 domains follow at residues 550–657 (WFHG…SEPV) and 668–756 (WYHA…RYPI). Y771 carries the phosphotyrosine; by SYK modification. Y775 bears the Phosphotyrosine mark. Position 783 is a phosphotyrosine; by ITK, SYK and TXK (Y783). One can recognise an SH3 domain in the interval 791–851 (TFKCAVKALF…PSNYVEEMIN (61 aa)). The 37-residue stretch at 895–931 (FVFSISMPSVAQWSLDVAADSQEELQDWVKKIREVAQ) folds into the PH 2; second part domain. The PI-PLC Y-box domain occupies 953-1070 (LSELVVYCRP…GYVLQPSTMR (118 aa)). Y977 bears the Phosphotyrosine mark. Positions 1071 to 1194 (DEAFDPFDKS…TGYRAVPLKN (124 aa)) constitute a C2 domain. S1221, S1227, S1233, and S1248 each carry phosphoserine. A Phosphotyrosine modification is found at Y1253. S1263 carries the post-translational modification Phosphoserine. The tract at residues 1271-1290 (FDSRERRAPRRTRVNGDNRL) is disordered.

As to quaternary structure, interacts with AGAP2 via its SH3 domain. Interacts (via SH2 domain) with RET. Interacts with FLT1 (tyrosine-phosphorylated). Interacts (via SH2 domain) with FGFR1, FGFR2, FGFR3 and FGFR4 (phosphorylated). Interacts with LAT (phosphorylated) upon TCR activation. Interacts (via SH3 domain) with the Pro-rich domain of TNK1. Associates with BLNK, VAV1, GRB2 and NCK1 in a B-cell antigen receptor-dependent fashion. Interacts with CBLB in activated T-cells; which inhibits phosphorylation. Interacts with SHB. Interacts (via SH3 domain) with the Arg/Gly-rich-flanked Pro-rich domains of KHDRBS1/SAM68. This interaction is selectively regulated by arginine methylation of KHDRBS1/SAM68. Interacts with INPP5D/SHIP1, THEMIS and CLNK. Interacts with AXL, FLT4 and KIT. Interacts with RALGPS1. Interacts (via the SH2 domains) with VIL1 (phosphorylated at C-terminus tyrosine phosphorylation sites). Interacts (via SH2 domain) with PDGFRA and PDGFRB (tyrosine phosphorylated). Interacts with PIP5K1C. Interacts with NTRK1 and NTRK2 (phosphorylated upon ligand-binding). Interacts with SYK; activates PLCG1. Interacts with GRB2, LAT and THEMIS upon TCR activation in thymocytes. Interacts with TESPA1; the association is increased with prolonged stimulation of the TCR and may facilitate the assembly of the LAT signalosome. Interacts (via C-terminal proline-rich domain (PRD)) with PLCG1 (via SH3 domain); this interaction leads to guanine nucleotide exchange from PlCG1 to DNM1 and enhances DNM1-dependent endocytosis. The cofactor is Ca(2+). Ubiquitinated by CBLB in activated T-cells. In terms of processing, tyrosine phosphorylated in response to signaling via activated FLT3, KIT and PDGFRA. Tyrosine phosphorylated by activated FGFR1, FGFR2, FGFR3 and FGFR4. Tyrosine phosphorylated by activated FLT1 and KDR. Tyrosine phosphorylated by activated PDGFRB. The receptor-mediated activation of PLCG1 involves its phosphorylation by tyrosine kinases, in response to ligation of a variety of growth factor receptors and immune system receptors. For instance, SYK phosphorylates and activates PLCG1 in response to ligation of the B-cell receptor. May be dephosphorylated by PTPRJ. Phosphorylated by ITK and TXK on Tyr-783 upon TCR activation in T-cells.

It localises to the cell projection. Its subcellular location is the lamellipodium. The protein resides in the ruffle. It catalyses the reaction a 1,2-diacyl-sn-glycero-3-phospho-(1D-myo-inositol-4,5-bisphosphate) + H2O = 1D-myo-inositol 1,4,5-trisphosphate + a 1,2-diacyl-sn-glycerol + H(+). The catalysed reaction is a 1,2-diacyl-sn-glycero-3-phospho-(1D-myo-inositol) + H2O = 1D-myo-inositol 1-phosphate + a 1,2-diacyl-sn-glycerol + H(+). Its activity is regulated as follows. Activated by phosphorylation on tyrosine residues. Functionally, mediates the production of the second messenger molecules diacylglycerol (DAG) and inositol 1,4,5-trisphosphate (IP3). Plays an important role in the regulation of intracellular signaling cascades. Becomes activated in response to ligand-mediated activation of receptor-type tyrosine kinases, such as PDGFRA, PDGFRB, EGFR, FGFR1, FGFR2, FGFR3 and FGFR4. Plays a role in actin reorganization and cell migration. Guanine nucleotide exchange factor that binds the GTPase DNM1 and catalyzes the dissociation of GDP, allowing a GTP molecule to bind in its place, therefore enhancing DNM1-dependent endocytosis. This is 1-phosphatidylinositol 4,5-bisphosphate phosphodiesterase gamma-1 from Rattus norvegicus (Rat).